The chain runs to 128 residues: Glycine cleavage system H protein (128 aa).

Positions 23-105 constitute a Lipoyl-binding domain; sequence VATVGISDHA…YEGGWLFKVQ (83 aa). The residue at position 64 (Lys-64) is an N6-lipoyllysine.

It belongs to the GcvH family. The glycine cleavage system is composed of four proteins: P, T, L and H. It depends on (R)-lipoate as a cofactor.

In terms of biological role, the glycine cleavage system catalyzes the degradation of glycine. The H protein shuttles the methylamine group of glycine from the P protein to the T protein. In Alcanivorax borkumensis (strain ATCC 700651 / DSM 11573 / NCIMB 13689 / SK2), this protein is Glycine cleavage system H protein.